Reading from the N-terminus, the 121-residue chain is Phospholipase A2 homolog ECO_00035 (121 aa).

7 cysteine pairs are disulfide-bonded: C25–C114, C27–C43, C42–C94, C48–C121, C49–C87, C56–C80, and C74–C85. An important for membrane-damaging activities in eukaryotes and bacteria; heparin-binding region spans residues K104–G116.

It belongs to the phospholipase A2 family. Group II subfamily. S49 sub-subfamily. In terms of assembly, monomer. Expressed by the venom gland.

The protein resides in the secreted. Its function is as follows. Snake venom phospholipase A2 homolog that lacks enzymatic activity. Shows high myotoxin activities and displays edema-inducing activities. Has cytotoxic activities against HUVEC cells (LC(50)=4.9 uL) and human lung adenocarcinoma A549 cells (LC(50)=3.5 uL). The chain is Phospholipase A2 homolog ECO_00035 from Echis coloratus (Carpet viper).